The primary structure comprises 248 residues: ATP synthase subunit a, chloroplastic (248 aa).

The next 5 helical transmembrane spans lie at 38 to 58 (QVLL…VLTV), 96 to 116 (VPFI…GALV), 135 to 155 (INTT…AGLA), 200 to 220 (LVVA…VMLL), and 221 to 241 (GLFT…AYIG).

It belongs to the ATPase A chain family. As to quaternary structure, F-type ATPases have 2 components, CF(1) - the catalytic core - and CF(0) - the membrane proton channel. CF(1) has five subunits: alpha(3), beta(3), gamma(1), delta(1), epsilon(1). CF(0) has four main subunits: a, b, b' and c.

Its subcellular location is the plastid. It is found in the chloroplast thylakoid membrane. Key component of the proton channel; it plays a direct role in the translocation of protons across the membrane. The polypeptide is ATP synthase subunit a, chloroplastic (Welwitschia mirabilis (Tree tumbo)).